A 178-amino-acid polypeptide reads, in one-letter code: Actin-related protein 2/3 complex subunit 3 (178 aa).

K29 is covalently cross-linked (Glycyl lysine isopeptide (Lys-Gly) (interchain with G-Cter in ubiquitin)).

This sequence belongs to the ARPC3 family. In terms of assembly, component of the Arp2/3 complex composed of ARP2, ARP3, ARC40/p41-ARC, ARC35/p34-ARC, ARC18/p21-ARC, ARC19/p20-ARC and ARC16/p16-ARC.

It is found in the cytoplasm. Its subcellular location is the cytoskeleton. Functions as a component of the Arp2/3 complex which is involved in regulation of actin polymerization and together with an activating nucleation-promoting factor (NPF) mediates the formation of branched actin networks. The polypeptide is Actin-related protein 2/3 complex subunit 3 (ARC18) (Saccharomyces cerevisiae (strain ATCC 204508 / S288c) (Baker's yeast)).